Reading from the N-terminus, the 117-residue chain is Immunoglobulin heavy variable 3-48 (117 aa).

The signal sequence occupies residues M1–C19. The framework-1 stretch occupies residues E20–S44. An Ig-like domain is found at E20–R117. C41 and C115 are joined by a disulfide. Positions G45–E52 are complementarity-determining-1. A framework-2 region spans residues M53–Y69. Residues I70 to I77 are complementarity-determining-2. A framework-3 region spans residues Y78–C115. Residues A116–R117 form a complementarity-determining-3 region.

In terms of assembly, immunoglobulins are composed of two identical heavy chains and two identical light chains; disulfide-linked. Post-translationally, the N-terminus is blocked.

It localises to the secreted. Its subcellular location is the cell membrane. Functionally, v region of the variable domain of immunoglobulin heavy chains that participates in the antigen recognition. Immunoglobulins, also known as antibodies, are membrane-bound or secreted glycoproteins produced by B lymphocytes. In the recognition phase of humoral immunity, the membrane-bound immunoglobulins serve as receptors which, upon binding of a specific antigen, trigger the clonal expansion and differentiation of B lymphocytes into immunoglobulins-secreting plasma cells. Secreted immunoglobulins mediate the effector phase of humoral immunity, which results in the elimination of bound antigens. The antigen binding site is formed by the variable domain of one heavy chain, together with that of its associated light chain. Thus, each immunoglobulin has two antigen binding sites with remarkable affinity for a particular antigen. The variable domains are assembled by a process called V-(D)-J rearrangement and can then be subjected to somatic hypermutations which, after exposure to antigen and selection, allow affinity maturation for a particular antigen. This is Immunoglobulin heavy variable 3-48 from Homo sapiens (Human).